The sequence spans 625 residues: Endo-1,4-beta-xylanase A (625 aa).

The N-terminal stretch at 1–19 (MKLFQIFPLLLSLTSVTLA) is a signal peptide. Residues 35–231 (VSTGHDVKKI…TGGGCSGSVE (197 aa)) enclose the GH11 1 domain. Residues 245–283 (DGKSKGGSSSGGSNGQGLGNGQGNGQGQGNGQGQSATGS) form a disordered region. Residues 252 to 276 (SSSGGSNGQGLGNGQGNGQGQGNGQ) are compositionally biased toward gly residues. Residues 255 to 279 (GGSNGQGLGNGQGNGQGQGNGQGQS) are linker. 2 repeat units span residues 259 to 268 (GQGLGNGQGN) and 269 to 278 (GQGQGNGQGQ). The tract at residues 259–278 (GQGLGNGQGNGQGQGNGQGQ) is 2 X 10 AA tandem repeats of G-Q-G-[LQ]-G-N-G-Q-G-[NQ]. CBM10 domains follow at residues 285–324 (KCPS…CGCG) and 332–371 (NCPS…CGCG). The tract at residues 374–403 (NTTPTTTTKKSNNSQPTQGQSNNNSSTNTN) is linker. A disordered region spans residues 379–399 (TTTKKSNNSQPTQGQSNNNSS). Residues 416 to 617 (TETSNKVGSI…GSGTSGTADF (202 aa)) form the GH11 2 domain. The Nucleophile role is filled by Glu510. The active-site Proton donor is the Glu603.

Belongs to the glycosyl hydrolase 11 (cellulase G) family.

The catalysed reaction is Endohydrolysis of (1-&gt;4)-beta-D-xylosidic linkages in xylans.. It functions in the pathway glycan degradation; xylan degradation. Functionally, hydrolyzes 1,4-beta linked polysaccharide backbones of xylans, one of the major hemicellulose components in hardwoods and softwoods. It is more active against xylopentaose than xylotetraose, has trace activity against xylotriose. The major products released from hydrolysis of xylooligosaccharides are xylobiose and xylotriose. The reiterated 40 AA domain is involved in binding the cellulase-hemicellulase complex. In Piromyces sp, this protein is Endo-1,4-beta-xylanase A (XYNA).